The primary structure comprises 479 residues: Ribulose bisphosphate carboxylase large chain (479 aa).

Positions Met-1–Ser-2 are excised as a propeptide. Substrate contacts are provided by Asn-123 and Thr-173. The active-site Proton acceptor is Lys-175. Lys-177 contacts substrate. 3 residues coordinate Mg(2+): Lys-201, Asp-203, and Glu-204. The residue at position 201 (Lys-201) is an N6-carboxylysine. Ser-208 is modified (phosphoserine). Residue His-294 is the Proton acceptor of the active site. Residues Arg-295 and His-327 each contribute to the substrate site. Residue Thr-330 is modified to Phosphothreonine. A substrate-binding site is contributed by Ser-379.

It belongs to the RuBisCO large chain family. Type I subfamily. In terms of assembly, heterohexadecamer of 8 large chains and 8 small chains; disulfide-linked. The disulfide link is formed within the large subunit homodimers. Requires Mg(2+) as cofactor. In terms of processing, the disulfide bond which can form in the large chain dimeric partners within the hexadecamer appears to be associated with oxidative stress and protein turnover.

The protein localises to the plastid. The protein resides in the chloroplast. It carries out the reaction 2 (2R)-3-phosphoglycerate + 2 H(+) = D-ribulose 1,5-bisphosphate + CO2 + H2O. The catalysed reaction is D-ribulose 1,5-bisphosphate + O2 = 2-phosphoglycolate + (2R)-3-phosphoglycerate + 2 H(+). Functionally, ruBisCO catalyzes two reactions: the carboxylation of D-ribulose 1,5-bisphosphate, the primary event in carbon dioxide fixation, as well as the oxidative fragmentation of the pentose substrate in the photorespiration process. Both reactions occur simultaneously and in competition at the same active site. This Capsella bursa-pastoris (Shepherd's purse) protein is Ribulose bisphosphate carboxylase large chain.